The following is a 1203-amino-acid chain: Exonuclease/helicase subunit RexA (1203 aa).

A UvrD-like helicase ATP-binding domain is found at 4–472 (VKLTPEQNEA…IRLKENFRSR (469 aa)). Residue 25–32 (ASAGSGKT) coordinates ATP. Residues 503–785 (VQGNISDYPV…RVMTFHKSKG (283 aa)) enclose the UvrD-like helicase C-terminal domain.

This sequence belongs to the helicase family. AddA subfamily. Heterodimer of RexA (AddA) and RexB. It depends on Mg(2+) as a cofactor.

The enzyme catalyses Couples ATP hydrolysis with the unwinding of duplex DNA by translocating in the 3'-5' direction.. The catalysed reaction is ATP + H2O = ADP + phosphate + H(+). In terms of biological role, the heterodimer acts both as an ATP-dependent DNA helicase and an ATP-dependent, dual-direction single-stranded exonuclease. Recognizes the L.lactis chi site (5'-GCGCGTG-3'), which stimulates homologous recombination. The RexA (AddA) nuclease domain is required for chi fragment generation; this subunit has 3'-&gt;5' exonuclease activity and probably also performs the helicase function. The protein is Exonuclease/helicase subunit RexA of Lactococcus lactis subsp. cremoris (strain MG1363).